The sequence spans 99 residues: Integration host factor subunit alpha (99 aa).

The tract at residues 49-72 (FGNFDLRDKNQRPGRNPKTGEDIP) is disordered.

This sequence belongs to the bacterial histone-like protein family. As to quaternary structure, heterodimer of an alpha and a beta chain.

This protein is one of the two subunits of integration host factor, a specific DNA-binding protein that functions in genetic recombination as well as in transcriptional and translational control. This Escherichia coli O9:H4 (strain HS) protein is Integration host factor subunit alpha.